We begin with the raw amino-acid sequence, 73 residues long: Large ribosomal subunit protein bL31 (73 aa).

4 residues coordinate Zn(2+): cysteine 16, cysteine 18, cysteine 38, and cysteine 41.

It belongs to the bacterial ribosomal protein bL31 family. Type A subfamily. In terms of assembly, part of the 50S ribosomal subunit. Requires Zn(2+) as cofactor.

In terms of biological role, binds the 23S rRNA. This is Large ribosomal subunit protein bL31 from Vibrio vulnificus (strain CMCP6).